Here is a 290-residue protein sequence, read N- to C-terminus: MLVLKCSTKLFILENMLKSHFPESLKVYGAVMNINRGNPFQKEVVLDSWPNFKVIITRREREAETDNLDHYTNAYAVFYKDIRAYQQLLEEHDVINWDQVFQIQGLQSELYAASKAVAKARLLDLDINLASFKAVHFSPVSSVPDHSFLTGPTPRLTYLSVSDADLLNRTWSRGGNQQCLRYLANLIACFPSVCVRDEKGNPVSWGITDQFATMCHGYTLPDHRRKGYSRLVALTLARKLQSRGFPSQGNVLDDNLASINLLKSVQAEFLPCRFHRLILTPAAFSRQAHL.

It carries out the reaction an acyl-CoA + glycine = an N-acylglycine + CoA + H(+). The enzyme catalyses (9Z)-octadecenoyl-CoA + glycine = N-(9Z-octadecenoyl)glycine + CoA + H(+). The catalysed reaction is hexadecanoyl-CoA + glycine = N-hexadecanoylglycine + CoA + H(+). Its pathway is lipid metabolism. In terms of biological role, catalyzes the conjugation of long-chain fatty acyl-CoA thioester and glycine to produce long-chain N-(fatty acyl)glycine, an intermediate in the primary fatty acid amide biosynthetic pathway. The sequence is that of Glycine-N-acyltransferase-like protein 3 from Mus musculus (Mouse).